We begin with the raw amino-acid sequence, 856 residues long: V-type proton ATPase subunit a (856 aa).

The Cytoplasmic portion of the chain corresponds to 1-409 (MAPKQDTPFR…NAYGTATYQE (409 aa)). Residues 410–428 (VNPAIPVIVTFPFLFAVMF) traverse the membrane as a helical segment. Topologically, residues 429–430 (GD) are vacuolar. A helical transmembrane segment spans residues 431–447 (FGHALIMLCAALAMIYW). Over 448–460 (EKPLKKVTFELFA) the chain is Cytoplasmic. A helical transmembrane segment spans residues 461 to 490 (MVFYGRYIVLVMAVFSVYTGLIYNDVFSKS). At 491-544 (MTLFDSQWKWVVPENFKEGMTVKAVLREPNGYRYPFGLDWRWHGTENELLFINS) the chain is on the vacuolar side. The helical transmembrane segment at 545–564 (YKMKMAIILGWAHMTYSLCF) threads the bilayer. The Cytoplasmic portion of the chain corresponds to 565 to 582 (SYINARHFKRPIDIWGNF). The chain crosses the membrane as a helical span at residues 583–603 (VPGMIFFQSIFGYLVLCIIYK). Residues 604-648 (WSVDWFGTGRQPPGLLNMLIYMFLQPGTLDGGVELYPGQATVQVI) are Vacuolar-facing. Residues 649–668 (LLLLAVIQVPILLFLKPFYL) traverse the membrane as a helical segment. The Cytoplasmic portion of the chain corresponds to 669-738 (RWENNRARAK…EVMIHQVIHT (70 aa)). Positions 689-710 (VSALDEDDEEDPSNGDDYEGAA) are disordered. Residues 692–707 (LDEDDEEDPSNGDDYE) show a composition bias toward acidic residues. Residues 739–763 (IEFCLNSVSHTASYLRLWALSLAHQ) traverse the membrane as a helical segment. The Vacuolar segment spans residues 764 to 784 (QLSAVLWSMTMAKALESKGLG). Residues 785-823 (GAIFLVVAFAMFFVLSVIILIIMEGVSAMLHSLRLAWVE) traverse the membrane as a helical segment. At 824–856 (SFSKFAEFGGWPFTPFSFKQQLEESEELKEYIG) the chain is on the cytoplasmic side.

This sequence belongs to the V-ATPase 116 kDa subunit family. In terms of assembly, V-ATPase is a heteromultimeric enzyme composed of a peripheral catalytic V1 complex (components A to H) attached to an integral membrane V0 proton pore complex (components: a, c, c', c'', d, e, f and VOA1).

The protein resides in the vacuole membrane. In terms of biological role, subunit of the V0 complex of vacuolar(H+)-ATPase (V-ATPase), a multisubunit enzyme composed of a peripheral complex (V1) that hydrolyzes ATP and a membrane integral complex (V0) that translocates protons. V-ATPase is responsible for acidifying and maintaining the pH of intracellular compartments. This is V-type proton ATPase subunit a (vph-1) from Neurospora crassa (strain ATCC 24698 / 74-OR23-1A / CBS 708.71 / DSM 1257 / FGSC 987).